The chain runs to 269 residues: 1-(5-phosphoribosyl)-5-[(5-phosphoribosylamino)methylideneamino] imidazole-4-carboxamide isomerase (269 aa).

Asp10 acts as the Proton acceptor in catalysis. Asp132 (proton donor) is an active-site residue.

This sequence belongs to the HisA/HisF family.

It is found in the cytoplasm. It carries out the reaction 1-(5-phospho-beta-D-ribosyl)-5-[(5-phospho-beta-D-ribosylamino)methylideneamino]imidazole-4-carboxamide = 5-[(5-phospho-1-deoxy-D-ribulos-1-ylimino)methylamino]-1-(5-phospho-beta-D-ribosyl)imidazole-4-carboxamide. It participates in amino-acid biosynthesis; L-histidine biosynthesis; L-histidine from 5-phospho-alpha-D-ribose 1-diphosphate: step 4/9. The sequence is that of 1-(5-phosphoribosyl)-5-[(5-phosphoribosylamino)methylideneamino] imidazole-4-carboxamide isomerase from Xylella fastidiosa (strain Temecula1 / ATCC 700964).